The sequence spans 486 residues: UDP-N-acetylmuramate--L-alanine ligase (486 aa).

An ATP-binding site is contributed by 123–129 (GTHGKTT).

It belongs to the MurCDEF family.

It is found in the cytoplasm. The catalysed reaction is UDP-N-acetyl-alpha-D-muramate + L-alanine + ATP = UDP-N-acetyl-alpha-D-muramoyl-L-alanine + ADP + phosphate + H(+). It participates in cell wall biogenesis; peptidoglycan biosynthesis. Its function is as follows. Cell wall formation. This is UDP-N-acetylmuramate--L-alanine ligase from Pseudomonas fluorescens (strain Pf0-1).